The primary structure comprises 396 residues: 8-amino-7-oxononanoate synthase (396 aa).

Arg-19 provides a ligand contact to substrate. 106–107 (GY) contributes to the pyridoxal 5'-phosphate binding site. His-131 contributes to the substrate binding site. The pyridoxal 5'-phosphate site is built by Ser-176, His-204, and Thr-233. Position 236 is an N6-(pyridoxal phosphate)lysine (Lys-236). Residue Thr-350 participates in substrate binding.

It belongs to the class-II pyridoxal-phosphate-dependent aminotransferase family. BioF subfamily. Homodimer. The cofactor is pyridoxal 5'-phosphate.

The enzyme catalyses 6-carboxyhexanoyl-[ACP] + L-alanine + H(+) = (8S)-8-amino-7-oxononanoate + holo-[ACP] + CO2. Its pathway is cofactor biosynthesis; biotin biosynthesis. Its function is as follows. Catalyzes the decarboxylative condensation of pimeloyl-[acyl-carrier protein] and L-alanine to produce 8-amino-7-oxononanoate (AON), [acyl-carrier protein], and carbon dioxide. The sequence is that of 8-amino-7-oxononanoate synthase from Pseudomonas syringae pv. syringae (strain B728a).